Reading from the N-terminus, the 760-residue chain is 5-methyltetrahydropteroyltriglutamate--homocysteine methyltransferase (760 aa).

Residues 15 to 18 (RELK) and Lys-114 each bind 5-methyltetrahydropteroyltri-L-glutamate. L-homocysteine is bound by residues 436–438 (IGS) and Glu-489. Residues 436–438 (IGS) and Glu-489 each bind L-methionine. Residues 520 to 521 (RC) and Trp-566 each bind 5-methyltetrahydropteroyltri-L-glutamate. Position 604 (Asp-604) interacts with L-homocysteine. Asp-604 is a binding site for L-methionine. Glu-610 serves as a coordination point for 5-methyltetrahydropteroyltri-L-glutamate. His-646, Cys-648, and Glu-670 together coordinate Zn(2+). The Proton donor role is filled by His-699. Cys-731 is a binding site for Zn(2+).

Belongs to the vitamin-B12 independent methionine synthase family. It depends on Zn(2+) as a cofactor.

The catalysed reaction is 5-methyltetrahydropteroyltri-L-glutamate + L-homocysteine = tetrahydropteroyltri-L-glutamate + L-methionine. It participates in amino-acid biosynthesis; L-methionine biosynthesis via de novo pathway; L-methionine from L-homocysteine (MetE route): step 1/1. In terms of biological role, catalyzes the transfer of a methyl group from 5-methyltetrahydrofolate to homocysteine resulting in methionine formation. This Shewanella oneidensis (strain ATCC 700550 / JCM 31522 / CIP 106686 / LMG 19005 / NCIMB 14063 / MR-1) protein is 5-methyltetrahydropteroyltriglutamate--homocysteine methyltransferase.